The sequence spans 361 residues: Dynein axonemal assembly factor 8 (361 aa).

Disordered stretches follow at residues 65-191 (DPAG…ERRK) and 309-334 (AQPGYGTARERVGSSSSSGHLGRRPL). The span at 136–157 (TLNTSASQSPRQGPQGEATRSP) shows a compositional bias: polar residues. Residues serine 142 and serine 144 each carry the phosphoserine modification. Residues 321-334 (GSSSSSGHLGRRPL) show a composition bias toward low complexity.

It is found in the dynein axonemal particle. It localises to the cytoplasm. Its function is as follows. In cyliated cells, dynein axonemal particle-specific protein required for deployment of ODA to the axoneme. Interacts with outer dynein arm (ODA) subunits. In Bos taurus (Bovine), this protein is Dynein axonemal assembly factor 8 (DNAAF8).